A 489-amino-acid chain; its full sequence is Glucose-1-phosphate adenylyltransferase small subunit, chloroplastic/amyloplastic (489 aa).

A chloroplast-targeting transit peptide spans 1–52; it reads ITVPSTSSKNLQNSLAFSSSSLSGDKIQTTSFLNRRYCRISSRAPIVVSPKA.

It belongs to the bacterial/plant glucose-1-phosphate adenylyltransferase family. As to quaternary structure, heterotetramer. In terms of tissue distribution, prominently expressed in the leaves. A lower level expression is seen in the roots.

The protein resides in the plastid. It localises to the chloroplast. Its subcellular location is the amyloplast. It carries out the reaction alpha-D-glucose 1-phosphate + ATP + H(+) = ADP-alpha-D-glucose + diphosphate. Its pathway is glycan biosynthesis; starch biosynthesis. Activated by 3'phosphoglycerate, inhibited by orthophosphate. Allosteric regulation. In terms of biological role, this protein plays a role in synthesis of starch. It catalyzes the synthesis of the activated glycosyl donor, ADP-glucose from Glc-1-P and ATP. This Beta vulgaris (Sugar beet) protein is Glucose-1-phosphate adenylyltransferase small subunit, chloroplastic/amyloplastic (AGPB1).